Here is a 133-residue protein sequence, read N- to C-terminus: MVKSTIEESVATGRRKQAVSSVRLRPGTGKIDVNGKAFDEYFPLEIQRATILSPLKVLGHTEEFDLIIRINGGGIQGQVIATRLGLARALLKKNGDSKQELKSRGFLTRDPRKKERKKYGHKKARKSFQFSKR.

Positions 95-113 (GDSKQELKSRGFLTRDPRK) are enriched in basic and acidic residues. The interval 95-133 (GDSKQELKSRGFLTRDPRKKERKKYGHKKARKSFQFSKR) is disordered. A compositionally biased stretch (basic residues) spans 114-133 (KERKKYGHKKARKSFQFSKR).

It belongs to the universal ribosomal protein uS9 family.

The protein is Small ribosomal subunit protein uS9 of Chlamydia felis (strain Fe/C-56) (Chlamydophila felis).